The primary structure comprises 271 residues: MTYLQESSRPAITVPKLQAMREAGEKIAMLTCYDASFAALLDRAGTDVLLIGDSLGNVLQGHTTTLPVSLDDIAYHTACVARVQPRALVVADLPFGTYGTPAEAFAHSVALMRAGAQMVKLEGGEWLADTIRFLVERSVPVCAHLGLTPQSVHAFGGFKVQGRTEAGAAQLLRDARAIEDAGAQLVVLEAVPTLVAAEVTHMLKIPTIGIGAGLDCSGQVLVLHDMLGIFPGKRPRFVKDFMQGQPSIQAAVEAYVSAVKECTFPGPEHSF.

Residues Asp-53 and Asp-92 each contribute to the Mg(2+) site. Residues Asp-53 to Ser-54, Asp-92, and Lys-120 each bind 3-methyl-2-oxobutanoate. Residue Glu-122 participates in Mg(2+) binding. Glu-189 (proton acceptor) is an active-site residue.

This sequence belongs to the PanB family. In terms of assembly, homodecamer; pentamer of dimers. Mg(2+) is required as a cofactor.

Its subcellular location is the cytoplasm. The catalysed reaction is 3-methyl-2-oxobutanoate + (6R)-5,10-methylene-5,6,7,8-tetrahydrofolate + H2O = 2-dehydropantoate + (6S)-5,6,7,8-tetrahydrofolate. Its pathway is cofactor biosynthesis; (R)-pantothenate biosynthesis; (R)-pantoate from 3-methyl-2-oxobutanoate: step 1/2. Catalyzes the reversible reaction in which hydroxymethyl group from 5,10-methylenetetrahydrofolate is transferred onto alpha-ketoisovalerate to form ketopantoate. This Burkholderia vietnamiensis (strain G4 / LMG 22486) (Burkholderia cepacia (strain R1808)) protein is 3-methyl-2-oxobutanoate hydroxymethyltransferase.